The following is a 519-amino-acid chain: Cytochrome P450 monooxygenase AtmP (519 aa).

The chain crosses the membrane as a helical span at residues 21 to 41 (SMLLVVTLVILFLWFIIPSPV). C457 serves as a coordination point for heme.

This sequence belongs to the cytochrome P450 family. Heme serves as cofactor.

It localises to the membrane. It functions in the pathway secondary metabolite biosynthesis. In terms of biological role, cytochrome P450 monooxygenase; part of the ATM2 gene cluster that mediates the biosynthesis of aflatrem, a tremorgenic mycotoxin with acute neurotoxic effects. Synthesis of geranylgeranyl diphosphate (GGPP) by AtmG (a GGPP synthase) precedes condensation of GGPP with indole 3-glycerol phosphate, followed by epoxidation and cyclization by AtmM (a FAD-dependent monooxygenase) and AtmC (a prenyltransferase) to produce paspaline. AtmB is also essential for paspaline production, but its exact role has not been identified yet. AtmP, a cytochrome P450 monooxygenase, subsequently converts paspaline to 13-desoxypaxilline via PC-M6 by removal of the C-30 methyl group and oxidation at C-10. AtmQ, a cytochrome P450 monooxygenase, then catalyzes the oxidation of 13-desoxypaxilline, first at C-7 to produce paspalicine and then at C-13 to form paspalinine. Finally, AtmD prenylates paspalinine to form aflatrem. The protein is Cytochrome P450 monooxygenase AtmP of Aspergillus flavus.